A 38-amino-acid chain; its full sequence is Spheniscin-1 (38 aa).

3 cysteine pairs are disulfide-bonded: C5–C33, C12–C27, and C17–C34.

Monomer. Secreted into the stomach cavity.

It localises to the secreted. Its function is as follows. Has antifungal activity and antibacterial activity against Gram-positive and Gram-negative bacteria. Involved in the process of food preservation in the stomach during the incubation fast. May also be present during infection. This Aptenodytes patagonicus (King penguin) protein is Spheniscin-1.